A 197-amino-acid polypeptide reads, in one-letter code: Pyridoxal 5'-phosphate synthase subunit PdxT (197 aa).

Residue Gly-52–Ser-54 participates in L-glutamine binding. Cys-84 acts as the Nucleophile in catalysis. Residues Arg-116 and Ile-143–Arg-144 contribute to the L-glutamine site. Residues His-179 and Glu-181 each act as charge relay system in the active site.

It belongs to the glutaminase PdxT/SNO family. In terms of assembly, in the presence of PdxS, forms a dodecamer of heterodimers. Only shows activity in the heterodimer.

The catalysed reaction is aldehydo-D-ribose 5-phosphate + D-glyceraldehyde 3-phosphate + L-glutamine = pyridoxal 5'-phosphate + L-glutamate + phosphate + 3 H2O + H(+). It catalyses the reaction L-glutamine + H2O = L-glutamate + NH4(+). It functions in the pathway cofactor biosynthesis; pyridoxal 5'-phosphate biosynthesis. Catalyzes the hydrolysis of glutamine to glutamate and ammonia as part of the biosynthesis of pyridoxal 5'-phosphate. The resulting ammonia molecule is channeled to the active site of PdxS. This chain is Pyridoxal 5'-phosphate synthase subunit PdxT, found in Ignicoccus hospitalis (strain KIN4/I / DSM 18386 / JCM 14125).